We begin with the raw amino-acid sequence, 270 residues long: MPELPEVETTRRGLQVHLVGRTLQRVVVRQRQLRYPVPARVEAAVVGEEVVALERRAKYLLIRLGGGAWLLLHLGMSGSLRLVAETDAPGRHDHVDLVLNDGRAVRLTDPRRFGCLLLGDGDPQDHRLLRRLGPEPLGSAFDGAVLHRAARGRRVAVKALLMDATVVVGVGNIYANEALFRAGIRPDRAAGRIARARYDRLAGAVRAVLEAALAAGGTTLRDFTDGSGEPGYFAVNLSVYGASVCPVCGGALRQIRLAQRGTWFCPRCQR.

The active-site Schiff-base intermediate with DNA is the Pro-2. The active-site Proton donor is Glu-3. Lys-58 acts as the Proton donor; for beta-elimination activity in catalysis. The DNA site is built by His-92, Arg-111, and Arg-153. The FPG-type zinc-finger motif lies at 238–270; sequence SVYGASVCPVCGGALRQIRLAQRGTWFCPRCQR. Catalysis depends on Arg-260, which acts as the Proton donor; for delta-elimination activity.

It belongs to the FPG family. Monomer. Requires Zn(2+) as cofactor.

It catalyses the reaction Hydrolysis of DNA containing ring-opened 7-methylguanine residues, releasing 2,6-diamino-4-hydroxy-5-(N-methyl)formamidopyrimidine.. The catalysed reaction is 2'-deoxyribonucleotide-(2'-deoxyribose 5'-phosphate)-2'-deoxyribonucleotide-DNA = a 3'-end 2'-deoxyribonucleotide-(2,3-dehydro-2,3-deoxyribose 5'-phosphate)-DNA + a 5'-end 5'-phospho-2'-deoxyribonucleoside-DNA + H(+). In terms of biological role, involved in base excision repair of DNA damaged by oxidation or by mutagenic agents. Acts as a DNA glycosylase that recognizes and removes damaged bases. Has a preference for oxidized purines, such as 7,8-dihydro-8-oxoguanine (8-oxoG). Has AP (apurinic/apyrimidinic) lyase activity and introduces nicks in the DNA strand. Cleaves the DNA backbone by beta-delta elimination to generate a single-strand break at the site of the removed base with both 3'- and 5'-phosphates. This chain is Formamidopyrimidine-DNA glycosylase, found in Halorhodospira halophila (strain DSM 244 / SL1) (Ectothiorhodospira halophila (strain DSM 244 / SL1)).